An 864-amino-acid polypeptide reads, in one-letter code: Microtubule-associated protein TORTIFOLIA1 (864 aa).

The interval 1-26 (MSTPTTSGSAAKPTRPARSSSLATRS) is disordered. Residues 17–26 (ARSSSLATRS) show a composition bias toward polar residues. HEAT repeat units lie at residues 76 to 113 (ETLPMFLNCLYDSCSDPKPAVKKECLHLLSYVCSLHCD), 117 to 154 (AHLTKIIAQIVKRLKDSDSGVRDACRDTIGALSGIYLK), 167 to 204 (LAVGLFVKPLFEAMGEQNKVVQSGASMCMARMVESAAS), 208 to 245 (TSFQKLCPRICKLLSNSSFLAKASLLPVVSSLSQVGAI), and 248 to 285 (QSLESLLESIHDCLGSTDWVTRKAAAETLTALASHSSG). The tract at residues 329-353 (DGASDDSKLSASEQLGSEKNGEKRS) is disordered. S414 carries the phosphoserine modification. The interval 426–504 (NDEEESGLDD…QSEGSFTSNR (79 aa)) is disordered. A compositionally biased stretch (polar residues) spans 439–448 (MGSSNRLKNT). Positions 449-459 (QADDKQVKGRF) are enriched in basic and acidic residues. The span at 489-504 (VSNTDNQSEGSFTSNR) shows a compositional bias: polar residues. Residues 508-561 (SAIQRQLLQLERQQTNLMNMLQEFIGGSHDSMVTLEGRVRGLERIVEDMARDLS) adopt a coiled-coil conformation. Residues 615 to 670 (DDWFIPPHAASRNGQAGPRRSPRSEQYENEHMGNGRRGWDNKASGTIRFGEGPSAR) are disordered. Residues 636–654 (PRSEQYENEHMGNGRRGWD) show a composition bias toward basic and acidic residues.

As to quaternary structure, interacts with WAV3. In terms of tissue distribution, expressed in roots, hypocotyls, stems, flowers, siliques, inflorescences, petioles, cotyledons, and leaves. Particularly present in root tips and shoot meristems.

Its subcellular location is the cytoplasm. The protein resides in the cytoskeleton. In terms of biological role, plant-specific microtubule-associated protein (MAP) that regulates the orientation of cortical microtubules and the direction of organ growth. Determines microtubule organization by modulating microtubule severing. The sequence is that of Microtubule-associated protein TORTIFOLIA1 from Arabidopsis thaliana (Mouse-ear cress).